The chain runs to 60 residues: Protein translocase subunit SecE (60 aa).

A helical membrane pass occupies residues 37–57 (LLGFALVGGIGYLIHLGYIIL).

This sequence belongs to the SecE/SEC61-gamma family. In terms of assembly, component of the Sec protein translocase complex. Heterotrimer consisting of SecY (alpha), SecG (beta) and SecE (gamma) subunits. The heterotrimers can form oligomers, although 1 heterotrimer is thought to be able to translocate proteins. Interacts with the ribosome. May interact with SecDF, and other proteins may be involved.

It localises to the cell membrane. In terms of biological role, essential subunit of the Sec protein translocation channel SecYEG. Clamps together the 2 halves of SecY. May contact the channel plug during translocation. This Aeropyrum pernix (strain ATCC 700893 / DSM 11879 / JCM 9820 / NBRC 100138 / K1) protein is Protein translocase subunit SecE.